The following is a 778-amino-acid chain: Semaphorin-3ab (778 aa).

Residues 1–17 (MDYLWWIVLLIWTLIAP) form the signal peptide. In terms of domain architecture, Sema spans 32–515 (RLKPSYKEML…SAIGVSQMPL (484 aa)). An N-linked (GlcNAc...) asparagine glycan is attached at Asn-54. Cys-105 and Cys-116 are oxidised to a cystine. N-linked (GlcNAc...) asparagine glycosylation is present at Asn-127. 4 disulfides stabilise this stretch: Cys-134/Cys-143, Cys-270/Cys-382, Cys-294/Cys-342, and Cys-518/Cys-536. One can recognise an Ig-like C2-type domain in the interval 579–668 (GEAGLLDKTV…FIQTLLRLTL (90 aa)). Asn-593 is a glycosylation site (N-linked (GlcNAc...) asparagine). Cys-652 and Cys-716 form a disulfide bridge. The segment at 727 to 778 (RRQKANLLHASQSHTSQILHSSQSHAKWKLLQENKKGRNRRTHEMQRAPRSV) is disordered. Positions 735–751 (HASQSHTSQILHSSQSH) are enriched in polar residues. Residues 756-778 (LLQENKKGRNRRTHEMQRAPRSV) are compositionally biased toward basic and acidic residues.

Belongs to the semaphorin family. Expressed in rhombomeres three and five, and in the posterior half of newly formed somites which is avoided by ventrally extending motor axons.

The protein resides in the secreted. Its function is as follows. Might normally influence the midsegmental pathway choice of the ventrally extending motor axons by contributing to a repulsive domain in the posterior somite. The protein is Semaphorin-3ab (sema3ab) of Danio rerio (Zebrafish).